A 134-amino-acid polypeptide reads, in one-letter code: Small ribosomal subunit protein uS8c (134 aa).

Belongs to the universal ribosomal protein uS8 family. In terms of assembly, part of the 30S ribosomal subunit.

The protein localises to the plastid. One of the primary rRNA binding proteins, it binds directly to 16S rRNA central domain where it helps coordinate assembly of the platform of the 30S subunit. This chain is Small ribosomal subunit protein uS8c (rps8), found in Cuscuta gronovii (Common dodder).